We begin with the raw amino-acid sequence, 214 residues long: Cytochrome c biogenesis ATP-binding export protein CcmA (214 aa).

Residues 12–214 enclose the ABC transporter domain; that stretch reads LAARALAFSR…TRMLTLEAAA (203 aa). 44-51 is an ATP binding site; the sequence is GDNGAGKT.

Belongs to the ABC transporter superfamily. CcmA exporter (TC 3.A.1.107) family. As to quaternary structure, the complex is composed of two ATP-binding proteins (CcmA) and two transmembrane proteins (CcmB).

It is found in the cell inner membrane. The catalysed reaction is heme b(in) + ATP + H2O = heme b(out) + ADP + phosphate + H(+). In terms of biological role, part of the ABC transporter complex CcmAB involved in the biogenesis of c-type cytochromes; once thought to export heme, this seems not to be the case, but its exact role is uncertain. Responsible for energy coupling to the transport system. The polypeptide is Cytochrome c biogenesis ATP-binding export protein CcmA (Xanthomonas campestris pv. campestris (strain 8004)).